Consider the following 452-residue polypeptide: Activating transcription factor 7-interacting protein 2 (452 aa).

Serine 184 is modified (phosphoserine). Residues 185 to 206 (RSKRISSVNHTPLNSSEKAGRK) form a disordered region. A Phosphoserine modification is found at serine 257. One can recognise a Fibronectin type-III domain in the interval 346-450 (PPQKPELKVK…IKSIPRFSEN (105 aa)).

Belongs to the MCAF family. As to quaternary structure, interacts with MBD1, SETDB1 and SP1. Probably forms a complex with SETDB1 and MBD1. In terms of tissue distribution, expressed in testis.

The protein localises to the nucleus. In terms of biological role, recruiter that couples transcriptional factors to general transcription apparatus and thereby modulates transcription regulation and chromatin formation. Can both act as an activator or a repressor depending on the context. Mediates MBD1-dependent transcriptional repression, probably by recruiting complexes containing SETDB1. The complex formed with MBD1 and SETDB1 represses transcription and probably couples DNA methylation and histone H3 'Lys-9' trimethylation (H3K9me3) activity. The sequence is that of Activating transcription factor 7-interacting protein 2 (Atf7ip2) from Mus musculus (Mouse).